The primary structure comprises 421 residues: Pyridinium-3,5-bisthiocarboxylic acid mononucleotide nickel insertion protein (421 aa).

This sequence belongs to the LarC family.

The catalysed reaction is Ni(II)-pyridinium-3,5-bisthiocarboxylate mononucleotide = pyridinium-3,5-bisthiocarboxylate mononucleotide + Ni(2+). In terms of biological role, involved in the biosynthesis of a nickel-pincer cofactor ((SCS)Ni(II) pincer complex). Binds Ni(2+), and functions in nickel delivery to pyridinium-3,5-bisthiocarboxylic acid mononucleotide (P2TMN), to form the mature cofactor. Is thus probably required for the activation of nickel-pincer cofactor-dependent enzymes. The chain is Pyridinium-3,5-bisthiocarboxylic acid mononucleotide nickel insertion protein from Alkaliphilus metalliredigens (strain QYMF).